We begin with the raw amino-acid sequence, 152 residues long: D-aminoacyl-tRNA deacylase (152 aa).

The short motif at Gly-137–Pro-138 is the Gly-cisPro motif, important for rejection of L-amino acids element.

The protein belongs to the DTD family. Homodimer.

The protein localises to the cytoplasm. The enzyme catalyses glycyl-tRNA(Ala) + H2O = tRNA(Ala) + glycine + H(+). It catalyses the reaction a D-aminoacyl-tRNA + H2O = a tRNA + a D-alpha-amino acid + H(+). In terms of biological role, an aminoacyl-tRNA editing enzyme that deacylates mischarged D-aminoacyl-tRNAs. Also deacylates mischarged glycyl-tRNA(Ala), protecting cells against glycine mischarging by AlaRS. Acts via tRNA-based rather than protein-based catalysis; rejects L-amino acids rather than detecting D-amino acids in the active site. By recycling D-aminoacyl-tRNA to D-amino acids and free tRNA molecules, this enzyme counteracts the toxicity associated with the formation of D-aminoacyl-tRNA entities in vivo and helps enforce protein L-homochirality. In Aromatoleum aromaticum (strain DSM 19018 / LMG 30748 / EbN1) (Azoarcus sp. (strain EbN1)), this protein is D-aminoacyl-tRNA deacylase.